We begin with the raw amino-acid sequence, 447 residues long: Nisin biosynthesis sensor protein NisK (447 aa).

The next 2 membrane-spanning stretches (helical) occupy residues 15-35 (VIEIIIGTCLLILLLLGLTFF) and 147-167 (TYLFFFLGEIILIIFSVYHLI). The Histidine kinase domain maps to 235–447 (ALSHDVKTPL…GAEVILKIKK (213 aa)). A Phosphohistidine; by autocatalysis modification is found at histidine 238.

The protein localises to the cell membrane. It catalyses the reaction ATP + protein L-histidine = ADP + protein N-phospho-L-histidine.. Its function is as follows. Member of the two-component regulatory system NisK/NisR involved in the regulation of the biosynthesis of lantibiotic nisin. NisK may function as a membrane-associated protein kinase that phosphorylates NisR in response to environmental signals. In Lactococcus lactis subsp. lactis (Streptococcus lactis), this protein is Nisin biosynthesis sensor protein NisK (nisK).